The chain runs to 124 residues: Large ribosomal subunit protein bL21 (124 aa).

This sequence belongs to the bacterial ribosomal protein bL21 family. Part of the 50S ribosomal subunit. Contacts protein L20.

Functionally, this protein binds to 23S rRNA in the presence of protein L20. This Sinorhizobium medicae (strain WSM419) (Ensifer medicae) protein is Large ribosomal subunit protein bL21.